Consider the following 256-residue polypeptide: Protein RKD4 (256 aa).

The RWP-RK domain maps to 130–216 (EKVTVKKKRN…MEEEVKNLEE (87 aa)). Residues 190–224 (RKLKSLNSLIKNLKNVGMEEEVKNLEEHRFLIEQE) are a coiled coil.

Its subcellular location is the nucleus. In terms of biological role, putative transcription factor. In Arabidopsis thaliana (Mouse-ear cress), this protein is Protein RKD4 (RKD4).